A 205-amino-acid polypeptide reads, in one-letter code: Adenylyl-sulfate kinase (205 aa).

Residue 31-38 coordinates ATP; the sequence is GLSGSGKS. Residue serine 105 is the Phosphoserine intermediate of the active site.

It belongs to the APS kinase family.

It carries out the reaction adenosine 5'-phosphosulfate + ATP = 3'-phosphoadenylyl sulfate + ADP + H(+). The protein operates within sulfur metabolism; hydrogen sulfide biosynthesis; sulfite from sulfate: step 2/3. Catalyzes the synthesis of activated sulfate. The polypeptide is Adenylyl-sulfate kinase (Shewanella halifaxensis (strain HAW-EB4)).